Here is a 95-residue protein sequence, read N- to C-terminus: Putative regulatory protein Daud_1598 (95 aa).

The protein belongs to the RemA family.

The sequence is that of Putative regulatory protein Daud_1598 from Desulforudis audaxviator (strain MP104C).